Consider the following 197-residue polypeptide: Guanylate kinase (197 aa).

The Guanylate kinase-like domain maps to 9–188 (GRLVVFSAPS…AVEAVILAIS (180 aa)). 16-23 (APSGTGKS) contacts ATP.

The protein belongs to the guanylate kinase family.

The protein resides in the cytoplasm. The catalysed reaction is GMP + ATP = GDP + ADP. Its function is as follows. Essential for recycling GMP and indirectly, cGMP. The chain is Guanylate kinase from Chlorobium luteolum (strain DSM 273 / BCRC 81028 / 2530) (Pelodictyon luteolum).